The following is a 437-amino-acid chain: Rhoptry apical surface protein 2 (437 aa).

Positions 45-179 (GCLGSLFFYL…PRINLSLHKL (135 aa)) constitute a C2 domain. In terms of domain architecture, PH spans 230–338 (EGPLERLNAN…FIEKLRAYRE (109 aa)). The segment at 341 to 437 (STRVPSQKGA…SVVGDEEPQT (97 aa)) is disordered. The span at 375-384 (RKSGGKKSRR) shows a compositional bias: basic residues.

Interacts with RASP1. Interacts with RASP3.

The protein resides in the cytoplasmic vesicle. Its subcellular location is the secretory vesicle. It is found in the rhoptry membrane. Functionally, essential for tachyzoite invasion of host cells by controlling rhoptry secretion. Binds to phosphatidic acid (PA) and phosphatidylinositol 4,5-bisphosphate (PIP2) lipids and thus, likely contributes to the assembly of the machinery that docks or primes the rhoptry to the parasite cell membrane prior to the fusion with the host cell membrane. This chain is Rhoptry apical surface protein 2, found in Toxoplasma gondii (strain ATCC 50853 / GT1).